Here is a 270-residue protein sequence, read N- to C-terminus: Formamidopyrimidine-DNA glycosylase (270 aa).

P2 (schiff-base intermediate with DNA) is an active-site residue. Residue E3 is the Proton donor of the active site. Residue K58 is the Proton donor; for beta-elimination activity of the active site. 3 residues coordinate DNA: H92, R111, and R153. The FPG-type zinc finger occupies 238-270 (SVYGASVCPVCGGALRQIRLAQRGTWFCPRCQR). Residue R260 is the Proton donor; for delta-elimination activity of the active site.

This sequence belongs to the FPG family. In terms of assembly, monomer. It depends on Zn(2+) as a cofactor.

The enzyme catalyses Hydrolysis of DNA containing ring-opened 7-methylguanine residues, releasing 2,6-diamino-4-hydroxy-5-(N-methyl)formamidopyrimidine.. It carries out the reaction 2'-deoxyribonucleotide-(2'-deoxyribose 5'-phosphate)-2'-deoxyribonucleotide-DNA = a 3'-end 2'-deoxyribonucleotide-(2,3-dehydro-2,3-deoxyribose 5'-phosphate)-DNA + a 5'-end 5'-phospho-2'-deoxyribonucleoside-DNA + H(+). Its function is as follows. Involved in base excision repair of DNA damaged by oxidation or by mutagenic agents. Acts as a DNA glycosylase that recognizes and removes damaged bases. Has a preference for oxidized purines, such as 7,8-dihydro-8-oxoguanine (8-oxoG). Has AP (apurinic/apyrimidinic) lyase activity and introduces nicks in the DNA strand. Cleaves the DNA backbone by beta-delta elimination to generate a single-strand break at the site of the removed base with both 3'- and 5'-phosphates. The chain is Formamidopyrimidine-DNA glycosylase from Halorhodospira halophila (strain DSM 244 / SL1) (Ectothiorhodospira halophila (strain DSM 244 / SL1)).